The chain runs to 600 residues: Aspartate--tRNA(Asp/Asn) ligase (600 aa).

Residue Glu187 participates in L-aspartate binding. The aspartate stretch occupies residues 211 to 214 (QIFK). L-aspartate is bound by residues Arg233 and His463. 233-235 (RDE) is a binding site for ATP. Glu497 contributes to the ATP binding site. Arg504 serves as a coordination point for L-aspartate. Residue 549–552 (GIDR) coordinates ATP.

The protein belongs to the class-II aminoacyl-tRNA synthetase family. Type 1 subfamily. Homodimer.

It localises to the cytoplasm. The enzyme catalyses tRNA(Asx) + L-aspartate + ATP = L-aspartyl-tRNA(Asx) + AMP + diphosphate. Its function is as follows. Aspartyl-tRNA synthetase with relaxed tRNA specificity since it is able to aspartylate not only its cognate tRNA(Asp) but also tRNA(Asn). Reaction proceeds in two steps: L-aspartate is first activated by ATP to form Asp-AMP and then transferred to the acceptor end of tRNA(Asp/Asn). The polypeptide is Aspartate--tRNA(Asp/Asn) ligase (Wolbachia sp. subsp. Brugia malayi (strain TRS)).